We begin with the raw amino-acid sequence, 232 residues long: Small ribosomal subunit protein uS3 (232 aa).

Residues 39–107 (IRAILHKELK…DVVINIVEIR (69 aa)) form the KH type-2 domain.

It belongs to the universal ribosomal protein uS3 family. Part of the 30S ribosomal subunit. Forms a tight complex with proteins S10 and S14.

In terms of biological role, binds the lower part of the 30S subunit head. Binds mRNA in the 70S ribosome, positioning it for translation. This Rhodopseudomonas palustris (strain BisA53) protein is Small ribosomal subunit protein uS3.